Reading from the N-terminus, the 121-residue chain is MKTSTNKPNEEVRAFAKNIRMSAHKVRRVMDQIRGRPYAQAYILLKFLPYKACYPIFQLLNSAAANAKNNMSFKKELFVSRAEVNEATSSKRFHFRAKGRSFCIRKQTCHITIVLKQLPEQ.

Belongs to the universal ribosomal protein uL22 family. Part of the 50S ribosomal subunit.

The protein resides in the plastid. It is found in the chloroplast. Its function is as follows. This protein binds specifically to 23S rRNA. In terms of biological role, the globular domain of the protein is located near the polypeptide exit tunnel on the outside of the subunit, while an extended beta-hairpin is found that lines the wall of the exit tunnel in the center of the 70S ribosome. The protein is Large ribosomal subunit protein uL22c (rpl22) of Welwitschia mirabilis (Tree tumbo).